The sequence spans 276 residues: 2,3,4,5-tetrahydropyridine-2,6-dicarboxylate N-succinyltransferase (276 aa).

R104 and D141 together coordinate substrate.

It belongs to the transferase hexapeptide repeat family. In terms of assembly, homotrimer.

The protein localises to the cytoplasm. It catalyses the reaction (S)-2,3,4,5-tetrahydrodipicolinate + succinyl-CoA + H2O = (S)-2-succinylamino-6-oxoheptanedioate + CoA. Its pathway is amino-acid biosynthesis; L-lysine biosynthesis via DAP pathway; LL-2,6-diaminopimelate from (S)-tetrahydrodipicolinate (succinylase route): step 1/3. The sequence is that of 2,3,4,5-tetrahydropyridine-2,6-dicarboxylate N-succinyltransferase from Legionella pneumophila (strain Paris).